A 295-amino-acid chain; its full sequence is UDP-N-acetylenolpyruvoylglucosamine reductase (295 aa).

The region spanning 23–188 (KVGGPADFLA…ISAKFALKPG (166 aa)) is the FAD-binding PCMH-type domain. Arg-167 is an active-site residue. The active-site Proton donor is the Ser-217. Glu-287 is an active-site residue.

Belongs to the MurB family. Requires FAD as cofactor.

The protein resides in the cytoplasm. The enzyme catalyses UDP-N-acetyl-alpha-D-muramate + NADP(+) = UDP-N-acetyl-3-O-(1-carboxyvinyl)-alpha-D-glucosamine + NADPH + H(+). It participates in cell wall biogenesis; peptidoglycan biosynthesis. Cell wall formation. The chain is UDP-N-acetylenolpyruvoylglucosamine reductase from Streptococcus pyogenes serotype M1.